A 156-amino-acid polypeptide reads, in one-letter code: Small ribosomal subunit protein uS7 (156 aa).

Belongs to the universal ribosomal protein uS7 family. Part of the 30S ribosomal subunit. Contacts proteins S9 and S11.

One of the primary rRNA binding proteins, it binds directly to 16S rRNA where it nucleates assembly of the head domain of the 30S subunit. Is located at the subunit interface close to the decoding center, probably blocks exit of the E-site tRNA. This is Small ribosomal subunit protein uS7 from Xanthobacter autotrophicus (strain ATCC BAA-1158 / Py2).